The sequence spans 1118 residues: Protein argonaute 1B (1118 aa).

Disordered regions lie at residues 1-175 (MALQ…SRTV) and 188-246 (APMV…RFPL). Basic residues predominate over residues 10–24 (PHHHQVPIMVKKKRT). The segment covering 25–35 (GSGSTGESSGE) has biased composition (low complexity). 3 stretches are compositionally biased toward gly residues: residues 54 to 92 (QHGG…HHPG), 100 to 110 (GRGGPGSHHPG), and 118 to 128 (GRGGSGSHHPG). 2 stretches are compositionally biased toward low complexity: residues 148–157 (RGGMPQPYYG) and 193–219 (PTPS…QFQQ). Polar residues predominate over residues 220–241 (LATRDQSSTSQAIQIAPPSSKS). One can recognise a PAZ domain in the interval 457 to 570 (PVIDFVAQLL…LPMEVCKIVE (114 aa)). Residues 746–1067 (LLIVILPDNN…AAFRARFYME (322 aa)) enclose the Piwi domain.

Belongs to the argonaute family. Ago subfamily.

Probably involved in the RNA silencing pathway. May bind to short RNAs such as microRNAs (miRNAs) or short interfering RNAs (siRNAs), and represses the translation of mRNAs which are complementary to them. This Oryza sativa subsp. japonica (Rice) protein is Protein argonaute 1B (AGO1B).